A 259-amino-acid chain; its full sequence is UPF0246 protein NMCC_0856 (259 aa).

Belongs to the UPF0246 family.

The protein is UPF0246 protein NMCC_0856 of Neisseria meningitidis serogroup C (strain 053442).